The chain runs to 117 residues: UPF0102 protein FTN_0424 (117 aa).

Belongs to the UPF0102 family.

This is UPF0102 protein FTN_0424 from Francisella tularensis subsp. novicida (strain U112).